Reading from the N-terminus, the 150-residue chain is UPF0178 protein Daro_2879 (150 aa).

Belongs to the UPF0178 family.

The chain is UPF0178 protein Daro_2879 from Dechloromonas aromatica (strain RCB).